A 209-amino-acid polypeptide reads, in one-letter code: Ion-translocating oxidoreductase complex subunit G (209 aa).

The Cytoplasmic portion of the chain corresponds to 1–8 (MLTAIRKN). The helical transmembrane segment at 9-29 (GLILAVFACVSTGLVALTYAL) threads the bilayer. Topologically, residues 30–209 (TAEQIQQQEQ…HNQPNPCEGQ (180 aa)) are periplasmic. FMN phosphoryl threonine is present on T175.

The protein belongs to the RnfG family. In terms of assembly, the complex is composed of six subunits: RnfA, RnfB, RnfC, RnfD, RnfE and RnfG. It depends on FMN as a cofactor.

The protein localises to the cell inner membrane. Part of a membrane-bound complex that couples electron transfer with translocation of ions across the membrane. The polypeptide is Ion-translocating oxidoreductase complex subunit G (Vibrio cholerae serotype O1 (strain ATCC 39541 / Classical Ogawa 395 / O395)).